A 473-amino-acid polypeptide reads, in one-letter code: H(+)/Cl(-) exchange transporter ClcA (473 aa).

Residues 1–32 (MKTDTPSLETPQAARLRRRQLIRQLLERDKTP) lie on the Cytoplasmic side of the membrane. Residues 33–69 (LAILFMAAVVGTLVGLAAVAFDKGVAWLQNQRMGALV) traverse the membrane as a helical segment. At 70–76 (HTADNYP) the chain is on the periplasmic side. A helical transmembrane segment spans residues 77–100 (LLLTVAFLCSAVLAMFGYFLVRKY). The Selectivity filter part_1 signature appears at 106-110 (GSGIP). Chloride is bound at residue Ser-107. Positions 109–116 (IPEIEGAL) form an intramembrane region, helical. Topologically, residues 117–123 (EDQRPVR) are cytoplasmic. The next 2 helical transmembrane spans lie at 124-141 (WWRVLPVKFFGGLGTLGG) and 148-166 (EGPTVQIGGNIGRMVLDIF). Residues 146–150 (GREGP) carry the Selectivity filter part_2 motif. The Cytoplasmic portion of the chain corresponds to 167–176 (RLKGDEARHT). Intramembrane regions (helical) lie at residues 177-189 (LLATGAAAGLAAA) and 193-201 (PLAGILFII). The Cytoplasmic segment spans residues 202 to 214 (EEMRPQFRYTLIS). The helical transmembrane segment at 215–232 (IKAVFIGVIMSTIMYRIF) threads the bilayer. At 233–252 (NHEVALIDVGKLSDAPLNTL) the chain is on the periplasmic side. The chain crosses the membrane as a helical span at residues 253-281 (WLYLILGIIFGIFGPIFNKWVLGMQDLLH). Residues 282 to 287 (RVHGGN) lie on the Cytoplasmic side of the membrane. A helical transmembrane segment spans residues 288–309 (ITKWILMGGAIGGLCGLLGFVA). Residues 310–329 (PATSGGGFNLIPIATAGNFS) are Periplasmic-facing. 2 consecutive transmembrane segments (helical) span residues 330-349 (MGMLVFIFVARVITTLLCFS) and 355-376 (GIFAPMLALGTVLGTAFGMVAV). Positions 355-359 (GIFAP) match the Selectivity filter part_3 motif. Positions 356 and 357 each coordinate chloride. Residues 377–386 (ELFPQYHLEA) lie on the Periplasmic side of the membrane. The helical intramembrane region spans 387 to 401 (GTFAIAGMGALLAAS). Residues 402–404 (IRA) constitute an intramembrane region (note=Loop between two helices). An intramembrane region (helical) is located at residues 405 to 416 (PLTGIILVLEMT). An intramembrane region (note=Loop between two helices) is located at residues 417–421 (DNYQL). A helical transmembrane segment spans residues 422 to 438 (ILPMIITGLGATLLAQF). Over 439–473 (TGGKPLYSAILARTLAKQEAEQLARSKAASASENT) the chain is Cytoplasmic. Tyr-445 is a chloride binding site.

It belongs to the chloride channel (TC 2.A.49) family. ClcA subfamily. As to quaternary structure, homodimer.

Its subcellular location is the cell inner membrane. It carries out the reaction 2 chloride(in) + H(+)(out) = 2 chloride(out) + H(+)(in). In terms of biological role, proton-coupled chloride transporter. Functions as antiport system and exchanges two chloride ions for 1 proton. Probably acts as an electrical shunt for an outwardly-directed proton pump that is linked to amino acid decarboxylation, as part of the extreme acid resistance (XAR) response. The polypeptide is H(+)/Cl(-) exchange transporter ClcA (Escherichia coli O9:H4 (strain HS)).